We begin with the raw amino-acid sequence, 273 residues long: Imidazole glycerol phosphate synthase subunit HisF (273 aa).

Residues aspartate 12 and aspartate 136 contribute to the active site.

Belongs to the HisA/HisF family. As to quaternary structure, heterodimer of HisH and HisF.

It is found in the cytoplasm. It catalyses the reaction 5-[(5-phospho-1-deoxy-D-ribulos-1-ylimino)methylamino]-1-(5-phospho-beta-D-ribosyl)imidazole-4-carboxamide + L-glutamine = D-erythro-1-(imidazol-4-yl)glycerol 3-phosphate + 5-amino-1-(5-phospho-beta-D-ribosyl)imidazole-4-carboxamide + L-glutamate + H(+). Its pathway is amino-acid biosynthesis; L-histidine biosynthesis; L-histidine from 5-phospho-alpha-D-ribose 1-diphosphate: step 5/9. In terms of biological role, IGPS catalyzes the conversion of PRFAR and glutamine to IGP, AICAR and glutamate. The HisF subunit catalyzes the cyclization activity that produces IGP and AICAR from PRFAR using the ammonia provided by the HisH subunit. The protein is Imidazole glycerol phosphate synthase subunit HisF of Halobacterium salinarum (strain ATCC 29341 / DSM 671 / R1).